We begin with the raw amino-acid sequence, 487 residues long: 26S proteasome non-ATPase regulatory subunit 3 homolog B (487 aa).

The tract at residues 1-21 is disordered; sequence MTQDVEMKDNQTPTQSVVSAP. Residues 10-21 show a composition bias toward polar residues; sequence NQTPTQSVVSAP. A PCI domain is found at 239 to 420; that stretch reads CRYLFYLGKI…GCMVSKETGD (182 aa). The interval 452-487 is disordered; sequence PPNTHREKESEEKRREMKQQEEELAKYMAEEDDDDF. Over residues 455–480 the composition is skewed to basic and acidic residues; it reads THREKESEEKRREMKQQEEELAKYMA.

It belongs to the proteasome subunit S3 family. In terms of assembly, component of the 19S regulatory particle (RP/PA700) lid subcomplex of the 26S proteasome. The 26S proteasome is composed of a core protease (CP), known as the 20S proteasome, capped at one or both ends by the 19S regulatory particle (RP/PA700). The RP/PA700 complex is composed of at least 17 different subunits in two subcomplexes, the base and the lid, which form the portions proximal and distal to the 20S proteolytic core, respectively. Interacts with UCH1 and UCH2. Preferentially expressed in flowers.

In terms of biological role, acts as a regulatory subunit of the 26 proteasome which is involved in the ATP-dependent degradation of ubiquitinated proteins. The polypeptide is 26S proteasome non-ATPase regulatory subunit 3 homolog B (Arabidopsis thaliana (Mouse-ear cress)).